The primary structure comprises 653 residues: Modification methylase StsI (653 aa).

Belongs to the N(4)/N(6)-methyltransferase family. Monomer.

The catalysed reaction is a 2'-deoxyadenosine in DNA + S-adenosyl-L-methionine = an N(6)-methyl-2'-deoxyadenosine in DNA + S-adenosyl-L-homocysteine + H(+). In terms of biological role, an alpha subtype methylase that recognizes the double-stranded sequence 5'-GGATG-3' in one strand and 3'-CATCC-5' in the other, methylates A of both strands, and protects the DNA from cleavage by the StsI endonuclease. The 2 domains of the protein participate in modification of the two strands. This Streptococcus sanguinis protein is Modification methylase StsI (stsIM).